Here is a 138-residue protein sequence, read N- to C-terminus: Small ribosomal subunit protein uS11c (138 aa).

Residues 1-22 are disordered; that stretch reads MAKPILRVGSRKNTRSASRKNV. Positions 9–22 are enriched in basic residues; the sequence is GSRKNTRSASRKNV.

This sequence belongs to the universal ribosomal protein uS11 family. Part of the 30S ribosomal subunit.

It is found in the plastid. Its subcellular location is the chloroplast. The polypeptide is Small ribosomal subunit protein uS11c (Draba nemorosa (Woodland whitlowgrass)).